The following is a 978-amino-acid chain: Glycine dehydrogenase (decarboxylating) (978 aa).

Lys-726 bears the N6-(pyridoxal phosphate)lysine mark.

Belongs to the GcvP family. In terms of assembly, the glycine cleavage system is composed of four proteins: P, T, L and H. It depends on pyridoxal 5'-phosphate as a cofactor.

The catalysed reaction is N(6)-[(R)-lipoyl]-L-lysyl-[glycine-cleavage complex H protein] + glycine + H(+) = N(6)-[(R)-S(8)-aminomethyldihydrolipoyl]-L-lysyl-[glycine-cleavage complex H protein] + CO2. The glycine cleavage system catalyzes the degradation of glycine. The P protein binds the alpha-amino group of glycine through its pyridoxal phosphate cofactor; CO(2) is released and the remaining methylamine moiety is then transferred to the lipoamide cofactor of the H protein. The polypeptide is Glycine dehydrogenase (decarboxylating) (Paraburkholderia phytofirmans (strain DSM 17436 / LMG 22146 / PsJN) (Burkholderia phytofirmans)).